The primary structure comprises 229 residues: Enolase-phosphatase E1 (229 aa).

The span at 208 to 218 (DTQSTHRQVSS) shows a compositional bias: polar residues. Residues 208-229 (DTQSTHRQVSSFDDIHPEQIPT) are disordered. Over residues 220–229 (DDIHPEQIPT) the composition is skewed to basic and acidic residues.

It belongs to the HAD-like hydrolase superfamily. MasA/MtnC family. Monomer. Requires Mg(2+) as cofactor.

The enzyme catalyses 5-methylsulfanyl-2,3-dioxopentyl phosphate + H2O = 1,2-dihydroxy-5-(methylsulfanyl)pent-1-en-3-one + phosphate. Its pathway is amino-acid biosynthesis; L-methionine biosynthesis via salvage pathway; L-methionine from S-methyl-5-thio-alpha-D-ribose 1-phosphate: step 3/6. It participates in amino-acid biosynthesis; L-methionine biosynthesis via salvage pathway; L-methionine from S-methyl-5-thio-alpha-D-ribose 1-phosphate: step 4/6. Bifunctional enzyme that catalyzes the enolization of 2,3-diketo-5-methylthiopentyl-1-phosphate (DK-MTP-1-P) into the intermediate 2-hydroxy-3-keto-5-methylthiopentenyl-1-phosphate (HK-MTPenyl-1-P), which is then dephosphorylated to form the acireductone 1,2-dihydroxy-3-keto-5-methylthiopentene (DHK-MTPene). This chain is Enolase-phosphatase E1, found in Cronobacter sakazakii (Enterobacter sakazakii).